We begin with the raw amino-acid sequence, 472 residues long: Glutamate--tRNA ligase (472 aa).

Positions 9-19 match the 'HIGH' region motif; sequence PSPTGYLHVGG. Positions 98, 100, 125, and 127 each coordinate Zn(2+). The short motif at 237–241 is the 'KMSKS' region element; it reads KLSKR. Lysine 240 contacts ATP.

It belongs to the class-I aminoacyl-tRNA synthetase family. Glutamate--tRNA ligase type 1 subfamily. As to quaternary structure, monomer. Zn(2+) serves as cofactor.

It localises to the cytoplasm. It catalyses the reaction tRNA(Glu) + L-glutamate + ATP = L-glutamyl-tRNA(Glu) + AMP + diphosphate. Functionally, catalyzes the attachment of glutamate to tRNA(Glu) in a two-step reaction: glutamate is first activated by ATP to form Glu-AMP and then transferred to the acceptor end of tRNA(Glu). The chain is Glutamate--tRNA ligase from Klebsiella pneumoniae (strain 342).